The primary structure comprises 148 residues: NTR domain-containing protein (148 aa).

Residues 1–26 (MVCRFSYVQVVLILVVLSVIISWANA) form the signal peptide. 3 disulfides stabilise this stretch: Cys27–Cys96, Cys29–Cys122, and Cys40–Cys146. Positions 27–146 (CSCFPPDETR…LQLFNDPQWC (120 aa)) constitute an NTR domain.

In terms of tissue distribution, prismatic layer of shell (at protein level). Expressed primarily in the mantle with highest level in the mantle edge and lower level in the mantle pallium.

The protein localises to the secreted. The protein is NTR domain-containing protein of Margaritifera margaritifera (Freshwater pearl mussel).